Reading from the N-terminus, the 358-residue chain is Protein SRG1 (358 aa).

The Fe2OG dioxygenase domain maps to 209-309 (SVQSMRMNYY…RLSIATFHNV (101 aa)). 3 residues coordinate Fe cation: His-233, Asp-235, and His-290.

Belongs to the iron/ascorbate-dependent oxidoreductase family. Low expression in roots and leaves.

This is Protein SRG1 (SRG1) from Arabidopsis thaliana (Mouse-ear cress).